Consider the following 811-residue polypeptide: Elongation factor G, mitochondrial (811 aa).

The transit peptide at M1–A64 directs the protein to the mitochondrion. The tr-type G domain occupies R96–S394. GTP-binding positions include A105–T112, D192–H196, and N246–D249.

This sequence belongs to the TRAFAC class translation factor GTPase superfamily. Classic translation factor GTPase family. EF-G/EF-2 subfamily.

The protein localises to the mitochondrion. It functions in the pathway protein biosynthesis; polypeptide chain elongation. In terms of biological role, mitochondrial GTPase that catalyzes the GTP-dependent ribosomal translocation step during translation elongation. During this step, the ribosome changes from the pre-translocational (PRE) to the post-translocational (POST) state as the newly formed A-site-bound peptidyl-tRNA and P-site-bound deacylated tRNA move to the P and E sites, respectively. Catalyzes the coordinated movement of the two tRNA molecules, the mRNA and conformational changes in the ribosome. The polypeptide is Elongation factor G, mitochondrial (Cryptococcus neoformans var. neoformans serotype D (strain B-3501A) (Filobasidiella neoformans)).